The sequence spans 233 residues: Fibrillarin-like rRNA/tRNA 2'-O-methyltransferase (233 aa).

Residues T89 to T90, E108 to F109, D133 to A134, and D153 to Q156 each bind S-adenosyl-L-methionine.

The protein belongs to the methyltransferase superfamily. Fibrillarin family. In terms of assembly, interacts with nop5. Component of box C/D small ribonucleoprotein (sRNP) particles that contain rpl7ae, FlpA and nop5, plus a guide RNA.

Involved in pre-rRNA and tRNA processing. Utilizes the methyl donor S-adenosyl-L-methionine to catalyze the site-specific 2'-hydroxyl methylation of ribose moieties in rRNA and tRNA. Site specificity is provided by a guide RNA that base pairs with the substrate. Methylation occurs at a characteristic distance from the sequence involved in base pairing with the guide RNA. The sequence is that of Fibrillarin-like rRNA/tRNA 2'-O-methyltransferase from Sulfurisphaera tokodaii (strain DSM 16993 / JCM 10545 / NBRC 100140 / 7) (Sulfolobus tokodaii).